The primary structure comprises 353 residues: Photosystem II protein D1 (353 aa).

At threonine 2 the chain carries N-acetylthreonine. Threonine 2 is subject to Phosphothreonine. Helical transmembrane passes span 29–46 (YIGW…TATS), 118–133 (HFLL…EWEL), and 142–156 (WIAV…AATA). Histidine 118 contacts chlorophyll a. Tyrosine 126 lines the pheophytin a pocket. Residues aspartate 170 and glutamate 189 each coordinate [CaMn4O5] cluster. Residues 197-218 (FHMLGVAGVFGGSLFSAMHGSL) form a helical membrane-spanning segment. Histidine 198 is a chlorophyll a binding site. Residues histidine 215 and 264–265 (SF) contribute to the a quinone site. A Fe cation-binding site is contributed by histidine 215. Histidine 272 contributes to the Fe cation binding site. A helical transmembrane segment spans residues 274–288 (FLAAWPVIGIWFTAL). Histidine 332, glutamate 333, aspartate 342, and alanine 344 together coordinate [CaMn4O5] cluster. Positions 345 to 353 (AIEAPSTNG) are excised as a propeptide.

The protein belongs to the reaction center PufL/M/PsbA/D family. In terms of assembly, PSII is composed of 1 copy each of membrane proteins PsbA, PsbB, PsbC, PsbD, PsbE, PsbF, PsbH, PsbI, PsbJ, PsbK, PsbL, PsbM, PsbT, PsbX, PsbY, PsbZ, Psb30/Ycf12, at least 3 peripheral proteins of the oxygen-evolving complex and a large number of cofactors. It forms dimeric complexes. It depends on The D1/D2 heterodimer binds P680, chlorophylls that are the primary electron donor of PSII, and subsequent electron acceptors. It shares a non-heme iron and each subunit binds pheophytin, quinone, additional chlorophylls, carotenoids and lipids. D1 provides most of the ligands for the Mn4-Ca-O5 cluster of the oxygen-evolving complex (OEC). There is also a Cl(-1) ion associated with D1 and D2, which is required for oxygen evolution. The PSII complex binds additional chlorophylls, carotenoids and specific lipids. as a cofactor. Tyr-161 forms a radical intermediate that is referred to as redox-active TyrZ, YZ or Y-Z. In terms of processing, C-terminally processed by CTPA; processing is essential to allow assembly of the oxygen-evolving complex and thus photosynthetic growth.

The protein localises to the plastid. It localises to the chloroplast thylakoid membrane. It catalyses the reaction 2 a plastoquinone + 4 hnu + 2 H2O = 2 a plastoquinol + O2. Photosystem II (PSII) is a light-driven water:plastoquinone oxidoreductase that uses light energy to abstract electrons from H(2)O, generating O(2) and a proton gradient subsequently used for ATP formation. It consists of a core antenna complex that captures photons, and an electron transfer chain that converts photonic excitation into a charge separation. The D1/D2 (PsbA/PsbD) reaction center heterodimer binds P680, the primary electron donor of PSII as well as several subsequent electron acceptors. This Amaranthus hybridus (Slim amaranth) protein is Photosystem II protein D1.